We begin with the raw amino-acid sequence, 808 residues long: MTSPKGKPSPKRSAPAPATAALTPCAEERTEGATSSASASASSHISSSFDSPRDDTVVLTGYTAESEHSAHGYERLHDIILQGSDTDADSEDGRANEDDVILFPHAEELSNAAAGVGGDDDNGRVVRLGTTQHLDESDSSEDEPTLNRVGDIPLEWYKDEDHIGYDIEGKKLMKKERSALERLLEATDDPNAMRTIYDALHDEKKTLSNADLQLIFNLQRNRTTNPNYDMYSEVQEDTVVFDPLNHPLARSGGPSKKAFVPALHDMKVIAKMVRRLRKEEAERRLRPAKEEKEEEDQLLWDDSHVEMDTHTHFKYFNRIPKPKLPPPGTFESYRPPPEYLPSERAKQRQARLRTIDRKEHFLPQSFDALRHVPFYHHTIQDRYQRCLDLAFFPRAQRTRLVVDPDKLLPELPDPKDLRPYPEKLSFHYKGHTATVRSVSVSPNGQYLATGCDDHLVRVFEVQTGRLMKRYDMGAPVQQVEFCPSTSLNILAVAVEYSLVFIVPTFAAHTLVNDHTIRFLRAPGLSAGQREAAHALGAVDTLGGRAVTQTALDADETAHEATADLHDIEEREKRAEFVDASAKERNAGIVVKIAMHAKVKKFCFHIKGDYLCALCPKDHVKYRQTIMLQLSKRKVFCPFRKFSEVVTDCRFHPREPIFFLATTNSVRCYNLMAHRLQRRFKASGGVTTCLSIHPEGDNFLVGDTTSHTSWFDMDFSDKPYKRMRSHKGVVNALAFHPKTNAYPLFATGASDGQVHVFHGMVYDDYNKNALVVPVKILKHQRPVYAVAWHPTLAWLFTSTEDGVVTAWTE.

2 stretches are compositionally biased toward low complexity: residues 1–25 (MTSPKGKPSPKRSAPAPATAALTPC) and 33–50 (ATSSASASASSHISSSFD). The disordered stretch occupies residues 1-55 (MTSPKGKPSPKRSAPAPATAALTPCAEERTEGATSSASASASSHISSSFDSPRDD). WD repeat units lie at residues 430-469 (GHTATVRSVSVSPNGQYLATGCDDHLVRVFEVQTGRLMKR), 640-680 (KFSE…RRFK), 682-720 (SGGVTTCLSIHPEGDNFLVGDTTSHTSWFDMDFSDKPYK), 724-766 (SHKG…DYNK), and 777-808 (KHQRPVYAVAWHPTLAWLFTSTEDGVVTAWTE).

This sequence belongs to the WD repeat BOP1/ERB1 family.

It is found in the nucleus. Its subcellular location is the nucleolus. It localises to the nucleoplasm. Functionally, required for maturation of ribosomal RNAs and formation of the large ribosomal subunit. The chain is Ribosome biogenesis protein BOP1 homolog from Leishmania major.